The chain runs to 376 residues: Lysocardiolipin acyltransferase 1 (376 aa).

The chain crosses the membrane as a helical span at residues F9 to L29. N-linked (GlcNAc...) asparagine glycosylation is present at N35. Residues A48–I68 form a helical membrane-spanning segment. Residues H85 to D90 carry the HXXXXD motif motif. K183 carries the N6-acetyllysine modification. 2 helical membrane-spanning segments follow: residues L309–Y329 and F336–I356.

The protein belongs to the 1-acyl-sn-glycerol-3-phosphate acyltransferase family. As to expression, widely expressed with highest expression in heart, liver and 12.5 dpc aorta-gonad-mesonephros and lower levels in the 16 dpc fetal liver and adult bone marrow. In bone marrow, highest levels are found in B-cells compared with whole bone marrow, T-cells, erythrocytes, and granulocytes.

It is found in the endoplasmic reticulum membrane. It carries out the reaction a 1-acyl-sn-glycero-3-phosphate + an acyl-CoA = a 1,2-diacyl-sn-glycero-3-phosphate + CoA. The enzyme catalyses a 1-acyl-sn-glycero-3-phospho-(1D-myo-inositol) + an acyl-CoA = a 1,2-diacyl-sn-glycero-3-phospho-(1D-myo-inositol) + CoA. It catalyses the reaction 1-acyl-sn-glycero-3-phospho-(1'-sn-glycerol) + an acyl-CoA = a 1,2-diacyl-sn-glycero-3-phospho-(1'-sn-glycerol) + CoA. The catalysed reaction is 1-hexadecanoyl-sn-glycero-3-phosphate + (9Z)-octadecenoyl-CoA = 1-hexadecanoyl-2-(9Z-octadecenoyl)-sn-glycero-3-phosphate + CoA. It carries out the reaction 1-(9Z-octadecenoyl)-sn-glycero-3-phosphate + (9Z)-octadecenoyl-CoA = 1,2-di-(9Z-octadecenoyl)-sn-glycero-3-phosphate + CoA. The enzyme catalyses 1-(9Z,12Z)-octadecadienoyl-sn-glycero-3-phosphate + (9Z)-octadecenoyl-CoA = 1-(9Z,12Z)-octadecadienoyl-2-(9Z)-octadecenoyl-sn-glycero-3-phosphate + CoA. It catalyses the reaction 1-(9Z,12Z,15Z)-octadecatrienoyl-sn-glycero-3-phosphate + (9Z)-octadecenoyl-CoA = 1-(9Z,12Z,15Z)-octadecatrienoyl-2-(9Z)-octadecenoyl-sn-glycero-3-phosphate + CoA. The catalysed reaction is 1-(9Z-octadecenoyl)-sn-glycero-3-phosphate + hexadecanoyl-CoA = 1-(9Z)-octadecenoyl-2-hexadecanoyl-sn-glycero-3-phosphate + CoA. It carries out the reaction 1-(9Z-octadecenoyl)-sn-glycero-3-phosphate + octadecanoyl-CoA = 1-(9Z-octadecenoyl)-2-octadecanoyl-sn-glycero-3-phosphate + CoA. The enzyme catalyses 1-acyl-sn-glycero-3-phospho-(1'-sn-glycerol) + (9Z)-octadecenoyl-CoA = 1-acyl-2-(9Z-octadecenoyl)-sn-glycero-3-phospho-(1'-sn-glycerol) + CoA. It catalyses the reaction a 1-acyl-sn-glycero-3-phospho-(1D-myo-inositol) + (9Z)-octadecenoyl-CoA = a 1-acyl-2-(9Z-octadecenoyl)-sn-glycero-3-phospho-(1D-myo-inositol) + CoA. The catalysed reaction is 1-hexadecanoyl-sn-glycero-3-phospho-(1D-myo-inositol) + hexadecanoyl-CoA = 1,2-dihexadecanoyl-sn-glycero-3-phospho-(1D-myo-inositol) + CoA. It carries out the reaction 1-hexadecanoyl-sn-glycero-3-phospho-(1D-myo-inositol) + octadecanoyl-CoA = 1-hexadecanoyl-2-octadecanoyl-sn-glycero-3-phospho-(1D-myo-inositol) + CoA. The enzyme catalyses 1-hexadecanoyl-sn-glycero-3-phospho-(1D-myo-inositol) + (9Z)-octadecenoyl-CoA = 1-hexadecanoyl-2-(9Z-octadecenoyl)-sn-glycero-3-phospho-(1D-myo-inositol) + CoA. It catalyses the reaction 1-hexadecanoyl-sn-glycero-3-phospho-(1D-myo-inositol) + (9Z,12Z)-octadecadienoyl-CoA = 1-hexadecanoyl-2-(9Z,12Z-octadecadienoyl)-sn-glycero-3-phospho-(1D-myo-inositol) + CoA. The catalysed reaction is 1-hexadecanoyl-sn-glycero-3-phospho-(1D-myo-inositol) + (5Z,8Z,11Z,14Z)-eicosatetraenoyl-CoA = 1-hexadecanoyl-2-(5Z,8Z,11Z,14Z-eicosatetraenoyl)-sn-glycero-3-phospho-D-myo-inositol + CoA. It carries out the reaction 1-hexadecanoyl-sn-glycero-3-phospho-(1'-sn-glycerol) + hexadecanoyl-CoA = 1,2-dihexadecanoyl-sn-glycero-3-phospho-(1'-sn-glycerol) + CoA. The enzyme catalyses 1-hexadecanoyl-sn-glycero-3-phospho-(1'-sn-glycerol) + octadecanoyl-CoA = 1-hexadecanoyl-2-octadecanoyl-sn-glycero-3-phospho-(1'-sn-glycerol) + CoA. It catalyses the reaction 1-hexadecanoyl-sn-glycero-3-phospho-(1'-sn-glycerol) + (9Z)-octadecenoyl-CoA = 1-hexadecanoyl-2-(9Z-octadecenoyl)-sn-glycero-3-phospho-(1'-sn-glycerol) + CoA. The catalysed reaction is 1-hexadecanoyl-sn-glycero-3-phospho-(1'-sn-glycerol) + (9Z,12Z)-octadecadienoyl-CoA = 1-hexadecanoyl-2-(9Z,12Z-octadecadienoyl)-sn-glycero-3-phospho-(1'-sn-glycerol) + CoA. It carries out the reaction 1-tetradecanoyl-sn-glycero-3-phospho-(1'-sn-glycerol) + (9Z)-octadecenoyl-CoA = 1-tetradecanoyl-2-(9Z-octadecenoyl)-sn-glycero-3-phospho-(1'-sn-glycerol) + CoA. The enzyme catalyses 1-octadecanoyl-sn-glycero-3-phospho-(1'-sn-glycerol) + (9Z)-octadecenoyl-CoA = 1-octadecanoyl-2-(9Z-octadecenoyl)-sn-glycero-3-phospho-(1'-sn-glycerol) + CoA. It catalyses the reaction 1-(9Z-octadecenoyl)-sn-glycero-3-phospho-(1'-sn-glycerol) + (9Z)-octadecenoyl-CoA = 1,2-di-(9Z-octadecenoyl)-sn-glycero-3-phospho-(1'-sn-glycerol) + CoA. The catalysed reaction is 1-hexadecanoyl-sn-glycero-3-phospho-(1D-myo-inositol) + dodecanoyl-CoA = 1-hexadecanoyl-2-dodecanoyl-sn-glycero-3-phospho-(1D-myo-inositol) + CoA. It carries out the reaction 1',3'-bis-[1-acyl-sn-glycero-3-phospho]-glycerol + (9Z)-octadecenoyl-CoA = 1'-[1-acyl-2-(9Z)-octadecenoyl-sn-glycero-3-phospho],3'-[1-acyl,2-hydroxy-sn-glycero-3-phospho]-glycerol + CoA. The enzyme catalyses 1'-[1,2-diacyl-sn-glycero-3-phospho],3'-[1-acyl-sn-glycero-3-phospho]-glycerol + (9Z)-octadecenoyl-CoA = 1'-[1,2-diacyl-sn-glycero-3-phospho],3'-[1-acyl,2-(9Z)-octadecenoyl-sn-glycero-3-phospho]-glycerol + CoA. It catalyses the reaction 1'-[1,2-diacyl-sn-glycero-3-phospho],3'-[1-acyl-sn-glycero-3-phospho]-glycerol + (9Z,12Z)-octadecadienoyl-CoA = 1'-[1,2-diacyl-sn-glycero-3-phospho],3'-[1-acyl,2-(9Z,12Z)-octadecadienoyl-sn-glycero-3-phospho]-glycerol + CoA. The catalysed reaction is 1'-[1,2-diacyl-sn-glycero-3-phospho],3'-[1-acyl-sn-glycero-3-phospho]-glycerol + dodecanoyl-CoA = 1'-[1,2-diacyl-sn-glycero-3-phospho],3'-[1-acyl,2-dodecanoyl-sn-glycero-3-phospho]-glycerol + CoA. It carries out the reaction 1',3'-bis-[1-acyl-sn-glycero-3-phospho]-glycerol + dodecanoyl-CoA = 1'-[1-acyl-2-dodecanoyl-sn-glycero-3-phospho],3'-[1-acyl,2-hydroxy-sn-glycero-3-phospho]-glycerol + CoA. The enzyme catalyses a 1-acyl-sn-glycero-3-phosphate + (9Z)-octadecenoyl-CoA = a 1-acyl-2-(9Z-octadecenoyl)-sn-glycero-3-phosphate + CoA. It catalyses the reaction 1',3'-bis-[1-acyl-sn-glycero-3-phospho]-glycerol + (9Z,12Z)-octadecadienoyl-CoA = 1'-[1-acyl-2-(9Z,12Z)-octadecadienoyl-sn-glycero-3-phospho],3'-[1-acyl,2-hydroxy-sn-glycero-3-phospho]-glycerol + CoA. The catalysed reaction is 1',3'-bis-[1-acyl-sn-glycero-3-phospho]-glycerol + hexadecanoyl-CoA = 1'-[1-acyl-2-hexadecanoyl-sn-glycero-3-phospho],3'-[1-acyl,2-hydroxy-sn-glycero-3-phospho]-glycerol + CoA. It carries out the reaction 1',3'-bis-[1-acyl-sn-glycero-3-phospho]-glycerol + octadecanoyl-CoA = 1'-[1-acyl-2-octadecanoyl-sn-glycero-3-phospho],3'-[1-acyl,2-hydroxy-sn-glycero-3-phospho]-glycerol + CoA. The enzyme catalyses 1'-[1,2-diacyl-sn-glycero-3-phospho],3'-[1-acyl-sn-glycero-3-phospho]-glycerol + octanoyl-CoA = 1'-[1,2-diacyl-sn-glycero-3-phospho],3'-[1-acyl,2-octanoyl-sn-glycero-3-phospho]-glycerol + CoA. It catalyses the reaction 1',3'-bis-[1-acyl-sn-glycero-3-phospho]-glycerol + octanoyl-CoA = 1'-[1-acyl-2-octanoyl-sn-glycero-3-phospho],3'-[1-acyl,2-hydroxy-sn-glycero-3-phospho]-glycerol + CoA. The catalysed reaction is 1'-[1,2-diacyl-sn-glycero-3-phospho],3'-[1-acyl-sn-glycero-3-phospho]-glycerol + hexadecanoyl-CoA = 1'-[1,2-diacyl-sn-glycero-3-phospho],3'-[1-acyl,2-hexadecanoyl-sn-glycero-3-phospho]-glycerol + CoA. It carries out the reaction 1'-[1,2-diacyl-sn-glycero-3-phospho],3'-[1-acyl-sn-glycero-3-phospho]-glycerol + (5Z,8Z,11Z,14Z)-eicosatetraenoyl-CoA = 1'-[1,2-diacyl-sn-glycero-3-phospho],3'-[1-acyl,2-(5Z,8Z,11Z,14Z)-eicosatetraenoyl-sn-glycero-3-phospho]-glycerol + CoA. The enzyme catalyses 1',3'-bis-[1-acyl-sn-glycero-3-phospho]-glycerol + (5Z,8Z,11Z,14Z)-eicosatetraenoyl-CoA = 1'-[1-acyl-2-(5Z,8Z,11Z,14Z)-eicosatetraenoyl-sn-glycero-3-phospho],3'-[1-acyl,2-hydroxy-sn-glycero-3-phospho]-glycerol + CoA. It catalyses the reaction a 1-acyl-sn-glycero-3-phospho-(1D-myo-inositol) + octadecanoyl-CoA = a 1-acyl-2-octadecanoyl-sn-glycero-3-phospho-(1D-myo-inositol) + CoA. The catalysed reaction is a 2-acyl-sn-glycero-3-phospho-D-myo-inositol + octadecanoyl-CoA = 1-octadecanoyl-2-acyl-sn-glycero-3-phospho-1D-myo-inositol + CoA. Its pathway is phospholipid metabolism; CDP-diacylglycerol biosynthesis; CDP-diacylglycerol from sn-glycerol 3-phosphate: step 2/3. In terms of biological role, exhibits acyl-CoA:lysocardiolipin acyltransferase (ALCAT) activity; catalyzes the reacylation of lyso-cardiolipin to cardiolipin (CL), a key step in CL remodeling. Recognizes both monolysocardiolipin and dilysocardiolipin as substrates with a preference for linoleoyl-CoA and oleoyl-CoA as acyl donors. Also exhibits 1-acyl-sn-glycerol-3-phosphate acyltransferase activity (AGPAT) activity; converts 1-acyl-sn-glycerol-3- phosphate (lysophosphatidic acid or LPA) into 1,2-diacyl-sn-glycerol-3- phosphate (phosphatidic acid or PA) by incorporating an acyl moiety at the sn-2 position of the glycerol backbone. Possesses lysophosphatidylinositol acyltransferase (LPIAT) activity. Possesses lysophosphatidylglycerol acyltransferase (LPGAT) activity. Required for establishment of the hematopoietic and endothelial lineages. This Mus musculus (Mouse) protein is Lysocardiolipin acyltransferase 1 (Lclat1).